The sequence spans 75 residues: Putative membrane protein insertion efficiency factor (75 aa).

This sequence belongs to the UPF0161 family.

It localises to the cell membrane. Could be involved in insertion of integral membrane proteins into the membrane. This chain is Putative membrane protein insertion efficiency factor (ytjA), found in Bacillus subtilis (strain 168).